A 149-amino-acid polypeptide reads, in one-letter code: Detocs response regulatory protein DtcB (149 aa).

In terms of domain architecture, Response regulatory spans 1 to 134; it reads MILIVEDDAH…DIEACYYDHN (134 aa). The residue at position 53 (Asp-53) is a 4-aspartylphosphate.

Post-translationally, probably phosphorylated by DtcA.

Its function is as follows. Possible phosphate scavenger member of the two-component regulatory system Detocs that confers resistance to bacteriophage. When the system (DtcA-DtcB-DtcC) is expressed in a susceptible E.coli (strain MG1655) it confers resistance to bacteriophages T2, T4, T5, T6 and SECphi27. Detocs inhibits T5 infection leading to growth arrest but not complete cell lysis, during SECphi27 infection leads to cell lysis. Overexpression of this protein along with the intact Detocs locus cancels T5 immunity; when the phosphate-receiving Asp-53 is mutated to Ala in this protein, immunity is restored. DtcA probably autophosphorylates upon sensing viral infection, and subsequently transfers the phosphate signal to DtcC which activates it, leading to an antiviral defense; DtcB (this subunit) may scavenge phosphorylation signals from accidental activation of DtcA. This is Detocs response regulatory protein DtcB from Vibrio alginolyticus.